The primary structure comprises 165 residues: UPF0178 protein Bphyt_5655 (165 aa).

Disordered regions lie at residues 115–134 (LRGSGVDTGGPSAFSQRDSK) and 139–165 (ELDRWLSRQRPQPDASAPQSADEPPTE).

This sequence belongs to the UPF0178 family.

The sequence is that of UPF0178 protein Bphyt_5655 from Paraburkholderia phytofirmans (strain DSM 17436 / LMG 22146 / PsJN) (Burkholderia phytofirmans).